The sequence spans 343 residues: SET and MYND domain-containing protein DDB_G0292454 (343 aa).

Positions 77-307 (EPFISYPSII…PGDEITISYT (231 aa)) constitute an SET domain. 8 residues coordinate Zn(2+): Cys-93, Cys-96, Cys-111, Cys-114, Cys-120, Cys-124, His-133, and Cys-137. Residues 93–137 (CNHCLKEIKKEEEEIKQECEECKVYKYCSIECKEKSSIEYHSVLC) form an MYND-type zinc finger.

The protein belongs to the class V-like SAM-binding methyltransferase superfamily.

Probable methyltransferase. This is SET and MYND domain-containing protein DDB_G0292454 from Dictyostelium discoideum (Social amoeba).